The following is a 221-amino-acid chain: Late protein I196L (221 aa).

Repeat copies occupy residues 28–48, 49–69, and 70–90. A 4; approximate repeat occupies 91–112; that stretch reads SNYSMTAIPNNISDKEDYTYFS.

It belongs to the asfivirus I196L family.

This chain is Late protein I196L, found in African swine fever virus (isolate Tick/Malawi/Lil 20-1/1983) (ASFV).